The following is a 340-amino-acid chain: tRNA-dihydrouridine(20/20a) synthase (340 aa).

FMN-binding positions include 22 to 24 (PMM) and Gln75. Cys105 (proton donor) is an active-site residue. Residues Lys144, His177, 217–219 (NGG), and 239–240 (GR) contribute to the FMN site.

The protein belongs to the Dus family. DusA subfamily. FMN is required as a cofactor.

It carries out the reaction 5,6-dihydrouridine(20) in tRNA + NADP(+) = uridine(20) in tRNA + NADPH + H(+). The enzyme catalyses 5,6-dihydrouridine(20) in tRNA + NAD(+) = uridine(20) in tRNA + NADH + H(+). It catalyses the reaction 5,6-dihydrouridine(20a) in tRNA + NADP(+) = uridine(20a) in tRNA + NADPH + H(+). The catalysed reaction is 5,6-dihydrouridine(20a) in tRNA + NAD(+) = uridine(20a) in tRNA + NADH + H(+). In terms of biological role, catalyzes the synthesis of 5,6-dihydrouridine (D), a modified base found in the D-loop of most tRNAs, via the reduction of the C5-C6 double bond in target uridines. Specifically modifies U20 and U20a in tRNAs. In Xylella fastidiosa (strain 9a5c), this protein is tRNA-dihydrouridine(20/20a) synthase.